The chain runs to 305 residues: UDP-3-O-acyl-N-acetylglucosamine deacetylase (305 aa).

Zn(2+) is bound by residues H79, H238, and D242. Catalysis depends on H265, which acts as the Proton donor.

The protein belongs to the LpxC family. The cofactor is Zn(2+).

The catalysed reaction is a UDP-3-O-[(3R)-3-hydroxyacyl]-N-acetyl-alpha-D-glucosamine + H2O = a UDP-3-O-[(3R)-3-hydroxyacyl]-alpha-D-glucosamine + acetate. The protein operates within glycolipid biosynthesis; lipid IV(A) biosynthesis; lipid IV(A) from (3R)-3-hydroxytetradecanoyl-[acyl-carrier-protein] and UDP-N-acetyl-alpha-D-glucosamine: step 2/6. Catalyzes the hydrolysis of UDP-3-O-myristoyl-N-acetylglucosamine to form UDP-3-O-myristoylglucosamine and acetate, the committed step in lipid A biosynthesis. This chain is UDP-3-O-acyl-N-acetylglucosamine deacetylase, found in Pectobacterium atrosepticum (strain SCRI 1043 / ATCC BAA-672) (Erwinia carotovora subsp. atroseptica).